The chain runs to 689 residues: DNA ligase (689 aa).

NAD(+)-binding positions include 40–44 (DSEYD), 89–90 (SL), and Glu-121. Lys-123 serves as the catalytic N6-AMP-lysine intermediate. Arg-144, Glu-179, Lys-295, and Lys-319 together coordinate NAD(+). Zn(2+) is bound by residues Cys-413, Cys-416, Cys-431, and Cys-437. The 80-residue stretch at 610-689 (REQSSLTDKI…EEWLTLIKNV (80 aa)) folds into the BRCT domain.

The protein belongs to the NAD-dependent DNA ligase family. LigA subfamily. Requires Mg(2+) as cofactor. Mn(2+) serves as cofactor.

It carries out the reaction NAD(+) + (deoxyribonucleotide)n-3'-hydroxyl + 5'-phospho-(deoxyribonucleotide)m = (deoxyribonucleotide)n+m + AMP + beta-nicotinamide D-nucleotide.. In terms of biological role, DNA ligase that catalyzes the formation of phosphodiester linkages between 5'-phosphoryl and 3'-hydroxyl groups in double-stranded DNA using NAD as a coenzyme and as the energy source for the reaction. It is essential for DNA replication and repair of damaged DNA. The polypeptide is DNA ligase (Rickettsia massiliae (strain Mtu5)).